We begin with the raw amino-acid sequence, 439 residues long: Glucose-1-phosphate adenylyltransferase (439 aa).

Residues Tyr-122, Gly-187, Glu-202 to Lys-203, and Ser-220 each bind alpha-D-glucose 1-phosphate.

This sequence belongs to the bacterial/plant glucose-1-phosphate adenylyltransferase family. In terms of assembly, homotetramer.

The catalysed reaction is alpha-D-glucose 1-phosphate + ATP + H(+) = ADP-alpha-D-glucose + diphosphate. Its pathway is glycan biosynthesis; glycogen biosynthesis. Involved in the biosynthesis of ADP-glucose, a building block required for the elongation reactions to produce glycogen. Catalyzes the reaction between ATP and alpha-D-glucose 1-phosphate (G1P) to produce pyrophosphate and ADP-Glc. The sequence is that of Glucose-1-phosphate adenylyltransferase from Thiobacillus denitrificans (strain ATCC 25259 / T1).